Here is a 548-residue protein sequence, read N- to C-terminus: Undecaprenyl phosphate-alpha-4-amino-4-deoxy-L-arabinose arabinosyl transferase 1 (548 aa).

A run of 12 helical transmembrane segments spans residues 11 to 31 (WLLFFLFILLTYFIPLETRLL), 89 to 109 (IVVVTSTLLTGWLIYKAAMVV), 114 to 134 (ALAFNAMTVFLSSFLVLAIGT), 137 to 157 (ILDPIVTLFVTAAMYSFLVAL), 180 to 200 (FLTKGFIAVVLPALVFLVMAI), 214 to 234 (IALLALAITAGPWVITVALQA), 263 to 283 (FYIPIVILGVLPWLGFLFGAL), 292 to 312 (GTLYFLLWFTLFFAFFSASKG), 314 to 334 (LLTYMLPCFVPLSILIAHYIE), 347 to 367 (VNASINIAFGLMGISAVIYSL), 382 to 402 (KIVLAISGFLFWSVIGAGALF), and 405 to 425 (TQFLTMFCSIGLSLVIGYAIP).

This sequence belongs to the glycosyltransferase 83 family.

The protein localises to the cell inner membrane. It carries out the reaction 4-amino-4-deoxy-alpha-L-arabinopyranosyl di-trans,octa-cis-undecaprenyl phosphate + lipid IVA = lipid IIA + di-trans,octa-cis-undecaprenyl phosphate.. The protein operates within lipopolysaccharide metabolism; 4-amino-4-deoxy-beta-L-arabinose-lipid A biosynthesis. Functionally, catalyzes the transfer of the L-Ara4N moiety of the glycolipid undecaprenyl phosphate-alpha-L-Ara4N to lipid A. The modified arabinose is attached to lipid A and is required for resistance to polymyxin and cationic antimicrobial peptides. The chain is Undecaprenyl phosphate-alpha-4-amino-4-deoxy-L-arabinose arabinosyl transferase 1 from Proteus mirabilis (strain HI4320).